Here is a 122-residue protein sequence, read N- to C-terminus: Large ribosomal subunit protein uL14 (122 aa).

Belongs to the universal ribosomal protein uL14 family. As to quaternary structure, part of the 50S ribosomal subunit. Forms a cluster with proteins L3 and L19. In the 70S ribosome, L14 and L19 interact and together make contacts with the 16S rRNA in bridges B5 and B8.

Binds to 23S rRNA. Forms part of two intersubunit bridges in the 70S ribosome. This is Large ribosomal subunit protein uL14 from Sphingopyxis alaskensis (strain DSM 13593 / LMG 18877 / RB2256) (Sphingomonas alaskensis).